Reading from the N-terminus, the 162-residue chain is Ribosome maturation factor RimM (162 aa).

The 72-residue stretch at 91 to 162 folds into the PRC barrel domain; the sequence is DGSFYIDDLI…LIDVVIIEGM (72 aa).

This sequence belongs to the RimM family. In terms of assembly, binds ribosomal protein uS19.

The protein resides in the cytoplasm. Its function is as follows. An accessory protein needed during the final step in the assembly of 30S ribosomal subunit, possibly for assembly of the head region. Essential for efficient processing of 16S rRNA. May be needed both before and after RbfA during the maturation of 16S rRNA. It has affinity for free ribosomal 30S subunits but not for 70S ribosomes. The sequence is that of Ribosome maturation factor RimM from Finegoldia magna (strain ATCC 29328 / DSM 20472 / WAL 2508) (Peptostreptococcus magnus).